Consider the following 177-residue polypeptide: 2-C-methyl-D-erythritol 2,4-cyclodiphosphate synthase (177 aa).

Residues aspartate 8 and histidine 10 each contribute to the a divalent metal cation site. Residues 8 to 10 (DVH) and 34 to 35 (HS) contribute to the 4-CDP-2-C-methyl-D-erythritol 2-phosphate site. Residue histidine 42 participates in a divalent metal cation binding. 4-CDP-2-C-methyl-D-erythritol 2-phosphate-binding positions include 56–58 (DIG), 61–65 (FPDTD), 132–135 (TTEE), phenylalanine 139, and arginine 142.

This sequence belongs to the IspF family. As to quaternary structure, homotrimer. Requires a divalent metal cation as cofactor.

It catalyses the reaction 4-CDP-2-C-methyl-D-erythritol 2-phosphate = 2-C-methyl-D-erythritol 2,4-cyclic diphosphate + CMP. The protein operates within isoprenoid biosynthesis; isopentenyl diphosphate biosynthesis via DXP pathway; isopentenyl diphosphate from 1-deoxy-D-xylulose 5-phosphate: step 4/6. Involved in the biosynthesis of isopentenyl diphosphate (IPP) and dimethylallyl diphosphate (DMAPP), two major building blocks of isoprenoid compounds. Catalyzes the conversion of 4-diphosphocytidyl-2-C-methyl-D-erythritol 2-phosphate (CDP-ME2P) to 2-C-methyl-D-erythritol 2,4-cyclodiphosphate (ME-CPP) with a corresponding release of cytidine 5-monophosphate (CMP). The protein is 2-C-methyl-D-erythritol 2,4-cyclodiphosphate synthase of Agathobacter rectalis (strain ATCC 33656 / DSM 3377 / JCM 17463 / KCTC 5835 / VPI 0990) (Eubacterium rectale).